Reading from the N-terminus, the 335-residue chain is Homeobox protein DBX1 (335 aa).

Disordered stretches follow at residues 56-102 (RSIP…LSPA) and 240-335 (KERE…ITVS). Low complexity predominate over residues 83-95 (GSPGSGSRRGSSP). Residues 181–240 (GMLRRAVFSDVQRKALEKTFQKQKYISKPDRKKLASKLGLKDSQVKIWFQNRRMKWRNSK) constitute a DNA-binding region (homeobox). Positions 299-317 (GPLPASPAHSSSPGKPSDF) are enriched in low complexity. The segment covering 318-335 (SDSDEDEEGEEDEEITVS) has biased composition (acidic residues).

Belongs to the H2.0 homeobox family.

The protein resides in the nucleus. Functionally, could have a role in patterning the central nervous system during embryogenesis. Has a key role in regulating the distinct phenotypic features that distinguish two major classes of ventral interneurons, V0 and V1 neurons. Regulates the transcription factor profile, neurotransmitter phenotype, intraspinal migratory path and axonal trajectory of V0 neurons, features that differentiate them from an adjacent set of V1 neurons. This is Homeobox protein DBX1 (Dbx1) from Rattus norvegicus (Rat).